A 240-amino-acid polypeptide reads, in one-letter code: MLHVVPLEWTVEEVVPYLERLAVWLRASVLVAFQLTATVALSVLSWWLMPPPVAELCERGRDDDPPSLSHLSLVVPVGCLFLLLRGPSIDRCPRKLPLLLAYCLPHALAFLTLLMCQPSPQAFVGAALLALAVDLSCLGASLLGCDPGASLRRLWLPSVLSLLCATALGLWLLRAAAPFFLGLHATTLLTVTLMLIHDLSLITCQSSFPESFQPSLRLYVENVALFIGMYHLLRLWLWSP.

7 helical membrane-spanning segments follow: residues 29–49 (VLVAFQLTATVALSVLSWWLM), 64–84 (DPPSLSHLSLVVPVGCLFLLL), 96–116 (LPLLLAYCLPHALAFLTLLMC), 123–143 (FVGAALLALAVDLSCLGASLL), 153–173 (RLWLPSVLSLLCATALGLWLL), 176–196 (AAPFFLGLHATTLLTVTLMLI), and 218–238 (LYVENVALFIGMYHLLRLWLW).

This sequence belongs to the cytomegalovirus US12 family.

The protein localises to the host membrane. The protein is Transmembrane protein US19 (US19) of Human cytomegalovirus (strain Merlin) (HHV-5).